The following is a 262-amino-acid chain: MAPALLLIPAALASFILAFGTGVEFVRFTSLRPLLGRISESGSPDARQGWLAALQDQSILVPLVWDLGLLLLFVGQHSLMATETVKEWMSRYFGVLQRSLYVACTALALQLVMRYWEPVPRGPVLWETRTEPWATWVPLLCFVLHVISWLLIFSILLVFDYAELMGLKQVYYHVLGLGEPLALKSPRALRLFSHLRHPVCVELLTVLWVVPTLGTDRLLLALLLTLYLGLAHGLDQHDLRYLRAQLQRKLHLLSRPQDGEAE.

At 1–4 the chain is on the nuclear side; the sequence is MAPA. Residues 5 to 28 form a helical membrane-spanning segment; that stretch reads LLLIPAALASFILAFGTGVEFVRF. Residues 29–58 lie on the Perinuclear space side of the membrane; it reads TSLRPLLGRISESGSPDARQGWLAALQDQS. Residues 59-80 traverse the membrane as a helical segment; the sequence is ILVPLVWDLGLLLLFVGQHSLM. Residues 81-97 are Nuclear-facing; that stretch reads ATETVKEWMSRYFGVLQ. The chain crosses the membrane as a helical span at residues 98–114; sequence RSLYVACTALALQLVMR. The Perinuclear space portion of the chain corresponds to 115–133; sequence YWEPVPRGPVLWETRTEPW. Residues 134–164 traverse the membrane as a helical segment; the sequence is ATWVPLLCFVLHVISWLLIFSILLVFDYAEL. Topologically, residues 165 to 191 are nuclear; it reads MGLKQVYYHVLGLGEPLALKSPRALRL. A helical transmembrane segment spans residues 192 to 210; sequence FSHLRHPVCVELLTVLWVV. The Perinuclear space segment spans residues 211–216; the sequence is PTLGTD. A helical transmembrane segment spans residues 217–234; that stretch reads RLLLALLLTLYLGLAHGL. Topologically, residues 235 to 262 are nuclear; sequence DQHDLRYLRAQLQRKLHLLSRPQDGEAE.

This sequence belongs to the nurim family.

Its subcellular location is the nucleus inner membrane. This chain is Nurim (NRM), found in Bos taurus (Bovine).